The primary structure comprises 257 residues: Triosephosphate isomerase (257 aa).

Substrate-binding residues include N11 and K13. Catalysis depends on H96, which acts as the Electrophile. The active-site Proton acceptor is the E170.

The protein belongs to the triosephosphate isomerase family. As to quaternary structure, homodimer.

It catalyses the reaction D-glyceraldehyde 3-phosphate = dihydroxyacetone phosphate. It participates in carbohydrate biosynthesis; gluconeogenesis. The protein operates within carbohydrate degradation; glycolysis; D-glyceraldehyde 3-phosphate from glycerone phosphate: step 1/1. The polypeptide is Triosephosphate isomerase (Giardia intestinalis (Giardia lamblia)).